Consider the following 252-residue polypeptide: ATP synthase subunit a (252 aa).

Helical transmembrane passes span 33–53 (GQVF…AFVA), 92–112 (VPFV…GALV), 130–150 (DINT…YAGL), 196–216 (LVVS…VMVL), and 217–237 (GLFT…TYIG).

This sequence belongs to the ATPase A chain family. F-type ATPases have 2 components, CF(1) - the catalytic core - and CF(0) - the membrane proton channel. CF(1) has five subunits: alpha(3), beta(3), gamma(1), delta(1), epsilon(1). CF(0) has four main subunits: a, b, b' and c.

It is found in the cellular thylakoid membrane. Functionally, key component of the proton channel; it plays a direct role in the translocation of protons across the membrane. The polypeptide is ATP synthase subunit a (Thermosynechococcus vestitus (strain NIES-2133 / IAM M-273 / BP-1)).